Consider the following 556-residue polypeptide: Formate--tetrahydrofolate ligase (556 aa).

65–72 (TPAGEGKS) contacts ATP.

Belongs to the formate--tetrahydrofolate ligase family.

It catalyses the reaction (6S)-5,6,7,8-tetrahydrofolate + formate + ATP = (6R)-10-formyltetrahydrofolate + ADP + phosphate. It participates in one-carbon metabolism; tetrahydrofolate interconversion. The chain is Formate--tetrahydrofolate ligase from Streptococcus pneumoniae (strain Hungary19A-6).